A 596-amino-acid polypeptide reads, in one-letter code: Probable tripeptidyl-peptidase SED2 (596 aa).

The N-terminal stretch at 1–16 (MRLLKFVCLLASVAAA) is a signal peptide. A propeptide spans 17 to 203 (KPTPGASHKV…LESMSVEEFA (187 aa)) (removed in mature form). In terms of domain architecture, Peptidase S53 spans 210-596 (LVTTACLREL…NFQALTKVLP (387 aa)). N-linked (GlcNAc...) asparagine glycosylation occurs at Asn265. Catalysis depends on charge relay system residues Glu286 and Asp290. Asn403 carries N-linked (GlcNAc...) asparagine glycosylation. Ser501 functions as the Charge relay system in the catalytic mechanism. 2 residues coordinate Ca(2+): Asp543 and Ile544. Residue Asn572 is glycosylated (N-linked (GlcNAc...) asparagine). Gly576 and Asp578 together coordinate Ca(2+).

It depends on Ca(2+) as a cofactor.

It is found in the secreted. The protein localises to the extracellular space. It catalyses the reaction Release of an N-terminal tripeptide from a polypeptide.. Its function is as follows. Secreted tripeptidyl-peptidase which degrades proteins at acidic pHs and is involved in virulence. This chain is Probable tripeptidyl-peptidase SED2 (SED2), found in Arthroderma benhamiae (strain ATCC MYA-4681 / CBS 112371) (Trichophyton mentagrophytes).